The primary structure comprises 547 residues: uncharacterized protein (547 aa).

It to B.subtilis RocB.

This is an uncharacterized protein from Bacillus subtilis (strain 168).